A 142-amino-acid chain; its full sequence is MSDSLVVCDVDPELKETLRKFRFRKETNNAAIIMKVDKDRQMVVLEDEFQNVSPEELKLELPERQPRFVVYSYKYVHDDGRVSYPLCFIFSSPVGCKPEQQMMYAGSKNRLVQIAELTKVFEIRTTDDLNETWLKEKLAFFR.

Serine 2 is modified (N-acetylserine). The ADF-H domain occupies 4–139 (SLVVCDVDPE…NETWLKEKLA (136 aa)).

The protein belongs to the actin-binding proteins ADF family. GMF subfamily. Expressed in rat thymus, testis, and spleen. Is present predominantly in proliferative and differentiative organs.

The chain is Glia maturation factor gamma (Gmfg) from Rattus norvegicus (Rat).